Here is a 927-residue protein sequence, read N- to C-terminus: Solute carrier family 12 protein B0303.11 (927 aa).

At 1–23 the chain is on the cytoplasmic side; the sequence is MPSSTASSEDAPITSTAWMNWKD. The helical transmembrane segment at 24-44 threads the bilayer; sequence VFLKCVQPMLAVVLLLRFSSI. The Extracellular portion of the chain corresponds to 45–53; sequence VDEAGFTTT. A helical membrane pass occupies residues 54–74; the sequence is IILVFFTFLVSLVTGWSACTV. Topologically, residues 75–95 are cytoplasmic; that stretch reads VSRKSSEVGFVKTMLAYSSTE. Residues 96-116 form a helical membrane-spanning segment; sequence FAISFSIIYLFCLLVATSTFL. At 117-141 the chain is on the extracellular side; that stretch reads TSAAEAVLHIFSTFSLELLDGATHD. Residues 142–159 traverse the membrane as a helical segment; it reads LRLVSSVLSLITLALCMV. Residues 160 to 165 are Cytoplasmic-facing; that stretch reads RNRNAR. A helical transmembrane segment spans residues 166–186; the sequence is FVRTFIFALTCIAIALQLSSV. Residues 187 to 212 are Extracellular-facing; it reads MFRYGEYQLRRVSDRNAMIPSPPNEE. The chain crosses the membrane as a helical span at residues 213 to 233; the sequence is ISTIFAQLFPAAMCGLTILNI. Residues 234–244 are Cytoplasmic-facing; that stretch reads GSKLQNTAPRG. The chain crosses the membrane as a helical span at residues 245–265; sequence ALIAIAVSACFYGAAAMLDYV. The Extracellular segment spans residues 266-284; that stretch reads EFFARTSTSNSTGSAEYNE. A glycan (N-linked (GlcNAc...) asparagine) is linked at N275. The chain crosses the membrane as a helical span at residues 285 to 305; it reads FLSYIYTTVPMAIVITLACVL. Residues 306–345 are Cytoplasmic-facing; that stretch reads SAVSTLKYAAVILQSLGRSNQCRCILWLAKGFGERDIPIR. Residues 346 to 366 traverse the membrane as a helical segment; it reads CLLLLSTVQILVSAIGSYDIL. Position 367 (C367) is a topological domain, extracellular. The chain crosses the membrane as a helical span at residues 368 to 388; that stretch reads IPTTVFYLFAYALFNFYVFLV. The Cytoplasmic portion of the chain corresponds to 389 to 394; the sequence is KLSDPE. A helical membrane pass occupies residues 395-415; that stretch reads IPSPPTLLSLAISAACFIASL. The Extracellular portion of the chain corresponds to 416-419; sequence YTNR. The helical transmembrane segment at 420-440 threads the bilayer; the sequence is HLALFIASIFAISYCSLLYII. Residues 441 to 927 lie on the Cytoplasmic side of the membrane; that stretch reads RRERNEDGEE…SMSALRLKFP (487 aa).

This sequence belongs to the SLC12A transporter family.

The protein localises to the cell membrane. This Caenorhabditis elegans protein is Solute carrier family 12 protein B0303.11.